Consider the following 644-residue polypeptide: Transmembrane 9 superfamily member 9 (644 aa).

The N-terminal stretch at 1 to 27 (MEFYRSSRRLQILGSVILLLSIHVAHS) is a signal peptide. At 28-281 (FYLPGVAPQD…YLLMSDNQIH (254 aa)) the chain is on the lumenal side. The helical transmembrane segment at 282–302 (WFSIVNSLMIVLFLSGMVAMI) threads the bilayer. Topologically, residues 303–351 (MLRTLYRDISRYNELETQEEAQEETGWKLVHGDVFRPPANSDLLCVYVG) are cytoplasmic. Residues 352-372 (TGVQCLGMVLVTMIFAMLGFL) traverse the membrane as a helical segment. Residues 373–377 (SPSNR) are Lumenal-facing. A helical transmembrane segment spans residues 378–398 (GGLMTAMLLLWVFMGLFAGYA). Topologically, residues 399 to 418 (SSRLYKMFKGTEWKRIAFRT) are cytoplasmic. A helical membrane pass occupies residues 419–439 (AFLFPAVVSAIFFVLNALIWG). The Lumenal segment spans residues 440–451 (QKSSGAVPFGTM). A helical transmembrane segment spans residues 452-472 (FALIFLWFGISVPLVFVGAYL). Over 473 to 501 (GFKKPPLDDPVKTNKIPRQIPEQAWYMNP) the chain is Cytoplasmic. A helical transmembrane segment spans residues 502–522 (IFSILIGGILPFGAVFIELFF). At 523–534 (ILTSIWLNQFYY) the chain is on the lumenal side. The chain crosses the membrane as a helical span at residues 535-555 (IFGFLFLVFVILMVTCAEITI). Topologically, residues 556–573 (VLCYFQLCSEDYLWWWRS) are cytoplasmic. Residues 574–594 (YLTSGSSAVYLFLYAAFYFFT) form a helical membrane-spanning segment. Over 595-600 (KLQITK) the chain is Lumenal. The helical transmembrane segment at 601 to 621 (LVSAMLYFGYMLIASYAFFVL) threads the bilayer. The Cytoplasmic segment spans residues 622 to 644 (TGTIGFYACLWFTRLIYSSVKID). The Endoplasmic reticulum export signal motif lies at 633-638 (FTRLIY). The short motif at 642–644 (KID) is the Golgi retention signal element.

Belongs to the nonaspanin (TM9SF) (TC 9.A.2) family.

Its subcellular location is the endosome membrane. It is found in the golgi apparatus membrane. The chain is Transmembrane 9 superfamily member 9 from Arabidopsis thaliana (Mouse-ear cress).